Reading from the N-terminus, the 195-residue chain is Transcriptional regulator GfcR (195 aa).

It belongs to the purine/pyrimidine phosphoribosyltransferase family. GfcR subfamily.

The polypeptide is Transcriptional regulator GfcR (Picrophilus torridus (strain ATCC 700027 / DSM 9790 / JCM 10055 / NBRC 100828 / KAW 2/3)).